Reading from the N-terminus, the 380-residue chain is Cytochrome b (380 aa).

4 consecutive transmembrane segments (helical) span residues 33–53 (FGSL…FLAM), 77–98 (WLIR…FLHV), 113–133 (WNMG…GYVL), and 178–198 (FFAF…VHLL). Heme b-binding residues include histidine 83 and histidine 97. 2 residues coordinate heme b: histidine 182 and histidine 196. An a ubiquinone-binding site is contributed by histidine 201. 4 consecutive transmembrane segments (helical) span residues 226-246 (IKDL…VLFF), 288-308 (LGGV…PLLH), 320-340 (ITQT…WIGG), and 347-367 (FIMI…IFMP).

Belongs to the cytochrome b family. In terms of assembly, the cytochrome bc1 complex contains 11 subunits: 3 respiratory subunits (MT-CYB, CYC1 and UQCRFS1), 2 core proteins (UQCRC1 and UQCRC2) and 6 low-molecular weight proteins (UQCRH/QCR6, UQCRB/QCR7, UQCRQ/QCR8, UQCR10/QCR9, UQCR11/QCR10 and a cleavage product of UQCRFS1). This cytochrome bc1 complex then forms a dimer. The cofactor is heme b.

The protein localises to the mitochondrion inner membrane. Component of the ubiquinol-cytochrome c reductase complex (complex III or cytochrome b-c1 complex) that is part of the mitochondrial respiratory chain. The b-c1 complex mediates electron transfer from ubiquinol to cytochrome c. Contributes to the generation of a proton gradient across the mitochondrial membrane that is then used for ATP synthesis. This is Cytochrome b (MT-CYB) from Synaptomys borealis (Northern bog lemming).